The following is a 203-amino-acid chain: Thymidylate kinase (203 aa).

10–17 (GIDGAGKS) is a binding site for ATP.

It belongs to the thymidylate kinase family.

The catalysed reaction is dTMP + ATP = dTDP + ADP. Phosphorylation of dTMP to form dTDP in both de novo and salvage pathways of dTTP synthesis. The protein is Thymidylate kinase of Cupriavidus necator (strain ATCC 17699 / DSM 428 / KCTC 22496 / NCIMB 10442 / H16 / Stanier 337) (Ralstonia eutropha).